A 239-amino-acid chain; its full sequence is Ribosomal RNA small subunit methyltransferase G (239 aa).

S-adenosyl-L-methionine is bound by residues G79, F84, 130-131, and R149; that span reads AE.

It belongs to the methyltransferase superfamily. RNA methyltransferase RsmG family.

Its subcellular location is the cytoplasm. Its function is as follows. Specifically methylates the N7 position of a guanine in 16S rRNA. In Lactobacillus johnsonii (strain CNCM I-12250 / La1 / NCC 533), this protein is Ribosomal RNA small subunit methyltransferase G.